We begin with the raw amino-acid sequence, 64 residues long: Large ribosomal subunit protein bL35 (64 aa).

It belongs to the bacterial ribosomal protein bL35 family.

The polypeptide is Large ribosomal subunit protein bL35 (Pelodictyon phaeoclathratiforme (strain DSM 5477 / BU-1)).